We begin with the raw amino-acid sequence, 337 residues long: Exopolysaccharide phosphotransferase cps2G (337 aa).

Belongs to the stealth family.

The polypeptide is Exopolysaccharide phosphotransferase cps2G (cps2G) (Lactiplantibacillus plantarum (strain ATCC BAA-793 / NCIMB 8826 / WCFS1) (Lactobacillus plantarum)).